A 195-amino-acid polypeptide reads, in one-letter code: Putative manganese efflux pump MntP (195 aa).

Helical transmembrane passes span 4 to 24 (ILIT…SLAM), 39 to 59 (FVLT…NLGL), 64 to 84 (FLGV…GWQM), 120 to 140 (ILLL…TLGT), 145 to 165 (ILIT…VGFA), and 175 to 195 (GSYA…KFVV).

This sequence belongs to the MntP (TC 9.B.29) family.

The protein localises to the cell membrane. Probably functions as a manganese efflux pump. The polypeptide is Putative manganese efflux pump MntP (Syntrophomonas wolfei subsp. wolfei (strain DSM 2245B / Goettingen)).